The sequence spans 401 residues: Transcription factor atf-2 (401 aa).

Over residues 19 to 38 (SASAEFSSSSSDSSNFSEGS) the composition is skewed to low complexity. Residues 19–78 (SASAEFSSSSSDSSNFSEGSPPESRRNSVNESVIKDEHYWERRRRNNDASRRSREKRRQN) are disordered. The segment covering 41–78 (ESRRNSVNESVIKDEHYWERRRRNNDASRRSREKRRQN) has biased composition (basic and acidic residues). Positions 54 to 100 (DEHYWERRRRNNDASRRSREKRRQNDLAMEEKIMLLSAENERLKSQL) constitute a bZIP 1 domain. Residues 60 to 85 (RRRRNNDASRRSREKRRQNDLAMEEK) are basic motif 1. A leucine-zipper 1 region spans residues 89-96 (LSAENERL). The span at 181–211 (SASSLFSSSSSSAFHPFRPSESAQQSFPSSS) shows a compositional bias: low complexity. Disordered stretches follow at residues 181 to 256 (SASS…PQPV) and 273 to 345 (QRRP…AAKR). Composition is skewed to polar residues over residues 222–256 (DSST…PQPV) and 273–283 (QRRPSPTVPQS). Positions 305 to 317 (ESVSSSASFSPSH) are enriched in low complexity. The bZIP 2 domain occupies 329 to 392 (SPQYVDRRRR…AHFKSVLAQR (64 aa)). Residues 335 to 360 (RRRRNNEAAKRCRANRRAVFEYRSRR) are basic motif 2. Residues 361-388 (VQLLEGENEDLRTQIETLKAEIAHFKSV) are a coiled coil. A leucine-zipper 2 region spans residues 364–378 (LEGENEDLRTQIETL).

The protein belongs to the bZIP family. In terms of assembly, interacts with cell death specification protein ces-2. Phosphorylated by mitogen-activated protein kinases pmk-2 and pmk-3. May be responsive to osmotic stress.

It localises to the nucleus. In terms of biological role, acts as a transcription factor that recognizes and binds to the sequence 5'-[GA]TTA[CT]GTAA[CT]-3', a sequence present in many promoters. Involved in the development of the excretory duct cell, by positively modulating embryonic transcription of putative transcription factor lin-48, acting in concert with cell death specification protein ces-2. Negatively modulates expression of key autophagy-related genes, bec-1/ATG6 and lgg-1/ATG8, and may link together autophagy and apoptosis during development. Positively modulates expression of neuropeptide pigment dispersing factor homologs pdf-1 and pdf-2. The chain is Transcription factor atf-2 from Caenorhabditis elegans.